Here is a 467-residue protein sequence, read N- to C-terminus: Serine/threonine-protein phosphatase 2A 56 kDa regulatory subunit epsilon isoform (467 aa).

The segment at 1–39 (MSSAPTTPPSVDKVDGFSRKSVRKARQKRSQSSSQFRSQ) is disordered. At serine 2 the chain carries N-acetylserine. Residue threonine 7 is modified to Phosphothreonine. Positions 20-29 (KSVRKARQKR) are enriched in basic residues. Phosphoserine is present on residues serine 30, serine 32, and serine 34. A compositionally biased stretch (low complexity) spans 30–39 (SQSSSQFRSQ).

This sequence belongs to the phosphatase 2A regulatory subunit B56 family. As to quaternary structure, PP2A consists of a common heterodimeric core enzyme, composed of a 36 kDa catalytic subunit (subunit C) and a 65 kDa constant regulatory subunit (PR65 or subunit A), that associates with a variety of regulatory subunits. Proteins that associate with the core dimer include three families of regulatory subunits B (the R2/B/PR55/B55, R3/B''/PR72/PR130/PR59 and R5/B'/B56 families), the 48 kDa variable regulatory subunit, viral proteins, and cell signaling molecules. Interacts with SGO1. Found in a complex with at least ARL2, PPP2CB; PPP2R1A, PPP2R2A, PPP2R5E and TBCD.

Its subcellular location is the cytoplasm. The B regulatory subunit might modulate substrate selectivity and catalytic activity, and might also direct the localization of the catalytic enzyme to a particular subcellular compartment. Interacts with cyclin G in vitro. The chain is Serine/threonine-protein phosphatase 2A 56 kDa regulatory subunit epsilon isoform (Ppp2r5e) from Mus musculus (Mouse).